The following is a 474-amino-acid chain: Aspartyl/glutamyl-tRNA(Asn/Gln) amidotransferase subunit B (474 aa).

This sequence belongs to the GatB/GatE family. GatB subfamily. In terms of assembly, heterotrimer of A, B and C subunits.

The enzyme catalyses L-glutamyl-tRNA(Gln) + L-glutamine + ATP + H2O = L-glutaminyl-tRNA(Gln) + L-glutamate + ADP + phosphate + H(+). It carries out the reaction L-aspartyl-tRNA(Asn) + L-glutamine + ATP + H2O = L-asparaginyl-tRNA(Asn) + L-glutamate + ADP + phosphate + 2 H(+). Its function is as follows. Allows the formation of correctly charged Asn-tRNA(Asn) or Gln-tRNA(Gln) through the transamidation of misacylated Asp-tRNA(Asn) or Glu-tRNA(Gln) in organisms which lack either or both of asparaginyl-tRNA or glutaminyl-tRNA synthetases. The reaction takes place in the presence of glutamine and ATP through an activated phospho-Asp-tRNA(Asn) or phospho-Glu-tRNA(Gln). The protein is Aspartyl/glutamyl-tRNA(Asn/Gln) amidotransferase subunit B of Helicobacter hepaticus (strain ATCC 51449 / 3B1).